Reading from the N-terminus, the 294-residue chain is ATP synthase gamma chain (294 aa).

The protein belongs to the ATPase gamma chain family. In terms of assembly, F-type ATPases have 2 components, CF(1) - the catalytic core - and CF(0) - the membrane proton channel. CF(1) has five subunits: alpha(3), beta(3), gamma(1), delta(1), epsilon(1). CF(0) has three main subunits: a, b and c.

It is found in the cell membrane. In terms of biological role, produces ATP from ADP in the presence of a proton gradient across the membrane. The gamma chain is believed to be important in regulating ATPase activity and the flow of protons through the CF(0) complex. The chain is ATP synthase gamma chain from Opitutus terrae (strain DSM 11246 / JCM 15787 / PB90-1).